A 1489-amino-acid chain; its full sequence is WD repeat-containing protein 7 (1489 aa).

7 WD repeats span residues 17-56, 62-104, 156-199, 324-366, 404-443, 462-507, and 558-597; these read APTHCISSILLTDDGGTIVTGCHDGQICLWDVSVELEVNP, GHTA…CIEF, ISPD…SGMQ, VICP…EKQE, NEPLKVTASVYIPAHGRLVCGREDGSIIIVPATQTAIVQL, GHRN…MKHI, and RHLFPIQVIKWRPSDDYLVVGCTDGSVYVWQMDTGALDRC. Disordered stretches follow at residues 754–783 and 911–947; these read IKEHLLDEEEDEEEARRQSREDSDPEYRAS and GDHMKKGPTRPPRPGTPDLSKARDSPPPSSNIVQGQI. The segment covering 767–782 has biased composition (basic and acidic residues); that stretch reads EARRQSREDSDPEYRA. Serine 935 is modified (phosphoserine). WD repeat units lie at residues 1350-1389 and 1391-1431; these read PAICRFYMVSYYERSHRIAVGARHGSVALYDIRTGKCQTI and GHKG…LGSI. A Phosphoserine modification is found at serine 1455.

The protein is WD repeat-containing protein 7 (Wdr7) of Mus musculus (Mouse).